The sequence spans 183 residues: Large ribosomal subunit protein uL6 (183 aa).

Belongs to the universal ribosomal protein uL6 family. In terms of assembly, part of the 50S ribosomal subunit.

Its function is as follows. This protein binds to the 23S rRNA, and is important in its secondary structure. It is located near the subunit interface in the base of the L7/L12 stalk, and near the tRNA binding site of the peptidyltransferase center. This is Large ribosomal subunit protein uL6 from Chlamydia abortus (strain DSM 27085 / S26/3) (Chlamydophila abortus).